Here is a 273-residue protein sequence, read N- to C-terminus: 4-hydroxybenzoate octaprenyltransferase (273 aa).

The next 8 helical transmembrane spans lie at 7-27 (IGIY…SEGF), 30-50 (LKLL…GCVI), 83-103 (FFVL…WLTI), 122-142 (WTYF…LMAF), 146-166 (LNEI…WTVI), 197-217 (LIIG…SNVF), 221-241 (ISYH…QYLI), and 253-273 (FLHN…SVGL).

This sequence belongs to the UbiA prenyltransferase family. It depends on Mg(2+) as a cofactor.

The protein resides in the cell inner membrane. The catalysed reaction is all-trans-octaprenyl diphosphate + 4-hydroxybenzoate = 4-hydroxy-3-(all-trans-octaprenyl)benzoate + diphosphate. It participates in cofactor biosynthesis; ubiquinone biosynthesis. Catalyzes the prenylation of para-hydroxybenzoate (PHB) with an all-trans polyprenyl group. Mediates the second step in the final reaction sequence of ubiquinone-8 (UQ-8) biosynthesis, which is the condensation of the polyisoprenoid side chain with PHB, generating the first membrane-bound Q intermediate 3-octaprenyl-4-hydroxybenzoate. The polypeptide is 4-hydroxybenzoate octaprenyltransferase (Vesicomyosocius okutanii subsp. Calyptogena okutanii (strain HA)).